Consider the following 208-residue polypeptide: Glycerol-3-phosphate acyltransferase (208 aa).

5 consecutive transmembrane segments (helical) span residues 3–23 (ILLA…VVVS), 51–71 (KAAI…VWLA), 78–98 (DVAI…PVFF), 115–135 (AVHP…AFFF), and 140–160 (LAAL…FGMP).

Belongs to the PlsY family. As to quaternary structure, probably interacts with PlsX.

The protein resides in the cell inner membrane. It carries out the reaction an acyl phosphate + sn-glycerol 3-phosphate = a 1-acyl-sn-glycero-3-phosphate + phosphate. It functions in the pathway lipid metabolism; phospholipid metabolism. In terms of biological role, catalyzes the transfer of an acyl group from acyl-phosphate (acyl-PO(4)) to glycerol-3-phosphate (G3P) to form lysophosphatidic acid (LPA). This enzyme utilizes acyl-phosphate as fatty acyl donor, but not acyl-CoA or acyl-ACP. This chain is Glycerol-3-phosphate acyltransferase, found in Burkholderia orbicola (strain MC0-3).